Here is a 788-residue protein sequence, read N- to C-terminus: LPS-assembly protein LptD (788 aa).

An N-terminal signal peptide occupies residues M1–A23.

This sequence belongs to the LptD family. As to quaternary structure, component of the lipopolysaccharide transport and assembly complex. Interacts with LptE and LptA.

It localises to the cell outer membrane. Its function is as follows. Together with LptE, is involved in the assembly of lipopolysaccharide (LPS) at the surface of the outer membrane. The polypeptide is LPS-assembly protein LptD (Photobacterium profundum (strain SS9)).